The sequence spans 98 residues: Ferredoxin-like protein (98 aa).

To ferredoxins from P.putida and C.tartarivorum, ferredoxin I from A.vinelandii, ferredoxin II from D.desulfuricans.

In terms of biological role, could be a 3Fe-4S cluster-containing protein. The protein is Ferredoxin-like protein (fixX) of Rhizobium leguminosarum bv. trifolii.